The chain runs to 98 residues: NADH-ubiquinone oxidoreductase chain 4L (98 aa).

Transmembrane regions (helical) follow at residues 2–22 (TPIF…TLIF), 29–49 (SLLC…LIIL), and 61–81 (ILLL…LVMV).

This sequence belongs to the complex I subunit 4L family. As to quaternary structure, core subunit of respiratory chain NADH dehydrogenase (Complex I) which is composed of 45 different subunits.

It localises to the mitochondrion inner membrane. The enzyme catalyses a ubiquinone + NADH + 5 H(+)(in) = a ubiquinol + NAD(+) + 4 H(+)(out). Its function is as follows. Core subunit of the mitochondrial membrane respiratory chain NADH dehydrogenase (Complex I) which catalyzes electron transfer from NADH through the respiratory chain, using ubiquinone as an electron acceptor. Part of the enzyme membrane arm which is embedded in the lipid bilayer and involved in proton translocation. The chain is NADH-ubiquinone oxidoreductase chain 4L (MT-ND4L) from Avahi cleesei (Cleese's woolly lemur).